A 273-amino-acid polypeptide reads, in one-letter code: WIMGHMVNAIGQIDEFVNLGANSIETDVSFDDSANPQYTYHGVPCDCGRSCLKWENYNDFLKGLRSATTPGNSKYQSKLVLVVFDLKTGSLYDNQANEAGKKLAKNLLQHYWNNGNNGGRAYIVLSIPDLNHYPLIKGFTDTLTQEGHPELLDEVGYDFSGNDAIGDVANAYKKAGVTGHVWQSDGITNCLLRGLTRVREAVANRDSGKGYINKVYYWTVDKRASTRDALDAGVDGVMTNYPDVITDVMNEAAYKNKFRLATYEDNPWETFKK.

H5 is a catalytic residue. The Mg(2+) site is built by E25 and D27. H41 serves as the catalytic Nucleophile. 2 disulfide bridges follow: C45-C51 and C47-C190. D85 provides a ligand contact to Mg(2+).

It belongs to the arthropod phospholipase D family. Class II subfamily. It depends on Mg(2+) as a cofactor. In terms of tissue distribution, expressed by the venom gland.

The protein localises to the secreted. It catalyses the reaction an N-(acyl)-sphingosylphosphocholine = an N-(acyl)-sphingosyl-1,3-cyclic phosphate + choline. The catalysed reaction is an N-(acyl)-sphingosylphosphoethanolamine = an N-(acyl)-sphingosyl-1,3-cyclic phosphate + ethanolamine. The enzyme catalyses a 1-acyl-sn-glycero-3-phosphocholine = a 1-acyl-sn-glycero-2,3-cyclic phosphate + choline. It carries out the reaction a 1-acyl-sn-glycero-3-phosphoethanolamine = a 1-acyl-sn-glycero-2,3-cyclic phosphate + ethanolamine. Its function is as follows. Dermonecrotic toxins cleave the phosphodiester linkage between the phosphate and headgroup of certain phospholipids (sphingolipid and lysolipid substrates), forming an alcohol (often choline) and a cyclic phosphate. This toxin acts on sphingomyelin (SM). It may also act on ceramide phosphoethanolamine (CPE), lysophosphatidylcholine (LPC) and lysophosphatidylethanolamine (LPE), but not on lysophosphatidylserine (LPS), and lysophosphatidylglycerol (LPG). It acts by transphosphatidylation, releasing exclusively cyclic phosphate products as second products. Induces dermonecrosis, hemolysis, increased vascular permeability, edema, inflammatory response, and platelet aggregation. In Loxosceles spadicea (Recluse spider), this protein is Dermonecrotic toxin LspaSicTox-alphaIA2iv.